The following is a 414-amino-acid chain: Serine-type anaerobic sulfatase-maturating enzyme (414 aa).

The 246-residue stretch at 5-250 (TYAPFAKPLY…LCTIFDEWVK (246 aa)) folds into the Radical SAM core domain. Positions 24 and 28 each coordinate [4Fe-4S] cluster. Tyr30 contacts S-adenosyl-L-methionine. Residue Cys31 participates in [4Fe-4S] cluster binding. Residues Gly76, Ser131, and Arg143 each coordinate S-adenosyl-L-methionine. Residues Cys276, Cys282, and Cys297 each coordinate [4Fe-4S] cluster. Asp298 acts as the Proton acceptor in catalysis. The [4Fe-4S] cluster site is built by Cys339, Cys342, Cys348, Cys352, and Cys371.

It belongs to the radical SAM superfamily. Anaerobic sulfatase-maturating enzyme family. It depends on [4Fe-4S] cluster as a cofactor.

It carries out the reaction L-seryl-[sulfatase] + S-adenosyl-L-methionine = 3-oxo-L-alanyl-[sulfatase] + 5'-deoxyadenosine + L-methionine + H(+). It participates in protein modification; sulfatase oxidation. Functionally, involved in 'Ser-type' sulfatase maturation under anaerobic conditions. Links the heparin and the chondroitin sulfate utilization pathways which contribute to the colonization of the intestinal tract. May catalyze the activation of chondro-6-sulfatase, i.e. the post-translational modification of a specific serine residue into 3-oxoalanine (also known as C(alpha)-formylglycine (FGly)), by a free radical chemical mechanism initiated via the reductive cleavage of S-adenosyl-L-methionine (SAM). Is also able to oxidize a cysteine residue in a synthetic substrate to FGly in vitro, but not in a recombinant Cys-type sulfatase in vivo. But since B.thetaiotaomicron possesses only Ser-type sulfatases, the oxidation of serine residues to FGly is the sole physiological activity. This Bacteroides thetaiotaomicron (strain ATCC 29148 / DSM 2079 / JCM 5827 / CCUG 10774 / NCTC 10582 / VPI-5482 / E50) protein is Serine-type anaerobic sulfatase-maturating enzyme (chuR).